Reading from the N-terminus, the 121-residue chain is MKLLVAPESIKTMTSCPAICPLILMDLSQLLNLPSTAKTTRVIPLLHPHLILLSFSLFQLHQPHPTHLLHPQPYTLILCPYICDQDSTCHHNENKAPCSFYPDQTVSGMVPFYVLGIGRAR.

It is found in the mitochondrion. This is an uncharacterized protein from Arabidopsis thaliana (Mouse-ear cress).